A 136-amino-acid polypeptide reads, in one-letter code: Small ribosomal subunit protein bS6 (136 aa).

Residues 96-136 (VTEPSALARSGSDAEADRAPADEGSVEAAGAEPGSEAEAEA) form a disordered region.

It belongs to the bacterial ribosomal protein bS6 family.

Binds together with bS18 to 16S ribosomal RNA. The chain is Small ribosomal subunit protein bS6 from Methylococcus capsulatus (strain ATCC 33009 / NCIMB 11132 / Bath).